A 399-amino-acid chain; its full sequence is Salivary protein Tsal1 (399 aa).

Residues 1 to 22 form the signal peptide; the sequence is MALKLVYGVFTLALLGISSVNA. Asparagine 268 carries an N-linked (GlcNAc...) asparagine glycan.

The protein belongs to the DNA/RNA non-specific endonuclease family. A divalent metal cation is required as a cofactor. As to expression, saliva (at protein level).

It localises to the secreted. Functionally, binds double-stranded DNA (dsDNA) with high affinity. Binds double-stranded RNA. Binds single-stranded DNA with lower affinity and with a preference for purine-rich sequences. Shows residual nuclease activity for dsDNA. May facilitate blood meal intake by lowering the local viscosity created by the release of host DNA. The chain is Salivary protein Tsal1 from Glossina morsitans morsitans (Savannah tsetse fly).